The following is an 84-amino-acid chain: MFMADAYLADTVWYVGQIIFIVAICLLVIIVVVAFLATFKLCIQLCGMCNTLVLSPSIYVFNRGRQFYEFYNDVKPPVLDVDDV.

Topologically, residues 1–18 (MFMADAYLADTVWYVGQI) are virion surface. The helical transmembrane segment at 19–39 (IFIVAICLLVIIVVVAFLATF) threads the bilayer. Topologically, residues 40 to 80 (KLCIQLCGMCNTLVLSPSIYVFNRGRQFYEFYNDVKPPVLD) are intravirion.

This sequence belongs to the betacoronaviruses E protein family. In terms of assembly, homopentamer. Interacts with membrane protein M in the budding compartment of the host cell, which is located between endoplasmic reticulum and the Golgi complex. Interacts with Nucleoprotein.

The protein resides in the host Golgi apparatus membrane. Plays a central role in virus morphogenesis and assembly. Acts as a viroporin and self-assembles in host membranes forming pentameric protein-lipid pores that allow ion transport. Also plays a role in the induction of apoptosis. This is Envelope small membrane protein from Porcine hemagglutinating encephalomyelitis virus (strain 67N) (HEV-67N).